A 3390-amino-acid polypeptide reads, in one-letter code: Genome polyprotein (3390 aa).

Positions 1-15 are interaction with host EXOC1; it reads MNNQRKKTGKPSINM. Over 1–100 the chain is Cytoplasmic; the sequence is MNNQRKKTGK…MLSIINKRKK (100 aa). Positions 37-72 are hydrophobic; homodimerization of capsid protein C; sequence LLNGQGPMKLVMAFIAFLRFLAIPPTAGVLARWGTF. A propeptide spans 101–114 (ER anchor for the capsid protein C, removed in mature form by serine protease NS3); sequence TSLCLMMMLPATLA. The helical transmembrane segment at 101–118 threads the bilayer; sequence TSLCLMMMLPATLAFHLT. At 119-243 the chain is on the extracellular side; it reads SRDGEPRMIV…VEKVETWALR (125 aa). An N-linked (GlcNAc...) asparagine; by host glycan is attached at Asn183. The helical transmembrane segment at 244–264 threads the bilayer; it reads HPGFTILALFLAHYIGTSLTQ. Residue Lys265 is a topological domain, cytoplasmic. A helical transmembrane segment spans residues 266 to 280; sequence VVIFILLMLVTPSMT. The Extracellular portion of the chain corresponds to 281 to 723; sequence MRCVGVGNRD…VHQIFGSAYT (443 aa). Disulfide bonds link Cys283–Cys310, Cys340–Cys401, Cys354–Cys385, and Cys372–Cys396. Residue Asn347 is glycosylated (N-linked (GlcNAc...) asparagine; by host). The tract at residues 378 to 391 is fusion peptide; that stretch reads DRGWGNGCGLFGKG. A glycan (N-linked (GlcNAc...) asparagine; by host) is linked at Asn433. Cystine bridges form between Cys463/Cys563 and Cys580/Cys611. Residues 724 to 744 form a helical membrane-spanning segment; that stretch reads ALFSGVSWIMKIGIGVLLTWI. Residues 745 to 750 lie on the Cytoplasmic side of the membrane; the sequence is GLNSKN. The chain crosses the membrane as a helical span at residues 751–771; it reads TSMSFSCIAIGIITLYLGVVV. At 772–1193 the chain is on the extracellular side; the sequence is QADMGCVINW…MIGSNASDRM (422 aa). Disulfide bonds link Cys777–Cys788, Cys828–Cys916, Cys952–Cys996, Cys1053–Cys1102, Cys1064–Cys1086, and Cys1085–Cys1089. N-linked (GlcNAc...) asparagine; by host glycans are attached at residues Asn903 and Asn980. 2 N-linked (GlcNAc...) asparagine; by host glycosylation sites follow: Asn1132 and Asn1188. The chain crosses the membrane as a helical span at residues 1194–1218; it reads GMGVTYLALIATFKIQPFLALGFFL. Topologically, residues 1219-1224 are cytoplasmic; the sequence is RKLTSR. Residues 1225–1243 form a helical membrane-spanning segment; sequence ENLLLGVGLAMAATLRLPE. Residues 1244–1267 are Lumenal-facing; sequence DIEQMANGIALGLMALKLITQFET. A helical transmembrane segment spans residues 1268–1288; sequence YQLWTALVSLTCSNTIFTLTV. Residue Ala1289 is a topological domain, cytoplasmic. A helical membrane pass occupies residues 1290 to 1308; that stretch reads WRTATLILAGISLLPVCQS. Over 1309 to 1315 the chain is Lumenal; that stretch reads SSMRKTD. Residues 1316–1336 traverse the membrane as a helical segment; sequence WLPMTVAAMGVPPLPLFIFSL. The Cytoplasmic portion of the chain corresponds to 1337-1344; the sequence is KDTLKRRS. A helical transmembrane segment spans residues 1345–1365; sequence WPLNEGVMAVGLVSILASSLL. Topologically, residues 1366–1368 are lumenal; the sequence is RND. A helical membrane pass occupies residues 1369–1389; the sequence is VPMAGPLVAGGLLIACYVITG. Residues 1390–1443 lie on the Cytoplasmic side of the membrane; sequence TSADLTVEKAADVTWEEEAEQTGVSHNLMITVDDDGTMRIKDDETENILTVLLK. Residues 1396 to 1435 form an interacts with and activates NS3 protease region; the sequence is VEKAADVTWEEEAEQTGVSHNLMITVDDDGTMRIKDDETE. An intramembrane region (helical) is located at residues 1444 to 1464; the sequence is TALLIVSGIFPYSIPATMLVW. Over 1465-2146 the chain is Cytoplasmic; it reads HTWQKQTQRS…VEELPETMET (682 aa). A Peptidase S7 domain is found at 1474 to 1651; sequence SGVLWDVPSP…NAEPDGPTPE (178 aa). Active-site charge relay system; for serine protease NS3 activity residues include His1524, Asp1548, and Ser1608. One can recognise a Helicase ATP-binding domain in the interval 1654 to 1810; it reads EEMFKKRNLT…QSNAPIQDEE (157 aa). Residues 1658 to 1661 form an important for RNA-binding region; it reads KKRN. An ATP-binding site is contributed by 1667–1674; that stretch reads LHPGSGKT. The DEAH box motif lies at 1758–1761; the sequence is DEAH. One can recognise a Helicase C-terminal domain in the interval 1821–1986; that stretch reads GNEWITDFVG…GIIPALFEPE (166 aa). Position 1862 is an N6-acetyllysine; by host (Lys1862). The chain crosses the membrane as a helical span at residues 2147 to 2167; sequence LLLLGLMILLTGGAMLFLISG. Over 2168–2169 the chain is Lumenal; the sequence is KG. The helical intramembrane region spans 2170–2190; that stretch reads IGKTSIGLICVIASSGMLWMA. Residue Asp2191 is a topological domain, lumenal. Residues 2192–2212 traverse the membrane as a helical segment; the sequence is VPLQWIASAIVLEFFMMVLLI. At 2213 to 2227 the chain is on the cytoplasmic side; sequence PEPEKQRTPQDNQLA. The helical transmembrane segment at 2228-2248 threads the bilayer; sequence YVVIGILTLAAIVAANEMGLL. Residues 2249–2273 are Lumenal-facing; that stretch reads ETTKRDLGMSKEPGVVSPTSYLDVD. An intramembrane region (helical) is located at residues 2274-2294; that stretch reads LHPASAWTLYAVATTVITPML. Topologically, residues 2295–2305 are lumenal; it reads RHTIENSTANV. Residues Asn2300 and Asn2304 are each glycosylated (N-linked (GlcNAc...) asparagine; by host). The segment at residues 2306 to 2326 is an intramembrane region (helical); the sequence is SLAAIANQAVVLMGLDKGWPI. Topologically, residues 2327–2346 are lumenal; that stretch reads SKMDLGVPLLALGCYSQVNP. The helical transmembrane segment at 2347–2367 threads the bilayer; that stretch reads LTLIAAVLLLVTHYAIIGPGL. The Cytoplasmic portion of the chain corresponds to 2368-2412; it reads QAKATREAQKRTAAGIMKNPTVDGIMTIDLDPVIYDSKFEKQLGQ. Residues 2413 to 2433 traverse the membrane as a helical segment; the sequence is VMLLVLCAVQLLLMRTSWALC. Residues 2434–2458 lie on the Lumenal side of the membrane; it reads EVLTLATGPITTLWEGSPGKFWNTT. Asn2456 carries N-linked (GlcNAc...) asparagine; by host glycosylation. The chain crosses the membrane as a helical span at residues 2459–2479; sequence IAVSMANIFRGSYLAGAGLAL. Over 2480–3390 the chain is Cytoplasmic; it reads SIMKSVGTGK…KEEESEGAIW (911 aa). The mRNA cap 0-1 NS5-type MT domain occupies 2492 to 2753; it reads TGSQGETLGE…DVDLGAGTRH (262 aa). S-adenosyl-L-methionine is bound at residue Ser2546. At Ser2546 the chain carries Phosphoserine. The active-site For 2'-O-MTase activity is the Lys2551. The short motif at 2567–2570 is the SUMO-interacting motif element; the sequence is VIDL. The S-adenosyl-L-methionine site is built by Gly2576, Trp2577, Thr2594, Lys2595, Asp2621, and Val2622. The active-site For 2'-O-MTase activity is Asp2636. Ile2637 is a binding site for S-adenosyl-L-methionine. Residues Lys2670 and Glu2706 each act as for 2'-O-MTase activity in the active site. Tyr2708 is an S-adenosyl-L-methionine binding site. Positions 2927, 2931, 2936, and 2939 each coordinate Zn(2+). Residues 3018-3168 enclose the RdRp catalytic domain; that stretch reads AMYADDTAGW…PIDDRFANAL (151 aa). His3202, Cys3218, and Cys3337 together coordinate Zn(2+).

In the N-terminal section; belongs to the class I-like SAM-binding methyltransferase superfamily. mRNA cap 0-1 NS5-type methyltransferase family. Homodimer. Interacts (via N-terminus) with host EXOC1 (via C-terminus); this interaction results in EXOC1 degradation through the proteasome degradation pathway. In terms of assembly, forms heterodimers with envelope protein E in the endoplasmic reticulum and Golgi. As to quaternary structure, homodimer; in the endoplasmic reticulum and Golgi. Interacts with protein prM. Interacts with non-structural protein 1. Homodimer; Homohexamer when secreted. Interacts with envelope protein E. In terms of assembly, interacts (via N-terminus) with serine protease NS3. As to quaternary structure, forms a heterodimer with serine protease NS3. May form homooligomers. Forms a heterodimer with NS2B. Interacts with NS4B. Interacts with unphosphorylated RNA-directed RNA polymerase NS5; this interaction stimulates RNA-directed RNA polymerase NS5 guanylyltransferase activity. Interacts with host SHFL. In terms of assembly, interacts with host MAVS; this interaction inhibits the synthesis of IFN-beta. Interacts with host SHFL. Interacts with host AUP1; the interaction occurs in the presence of Dengue virus NS4B and induces lipophagy which facilitates production of virus progeny particles. As to quaternary structure, interacts with serine protease NS3. Homodimer. Interacts with host STAT2; this interaction inhibits the phosphorylation of the latter, and, when all viral proteins are present (polyprotein), targets STAT2 for degradation. Interacts with serine protease NS3. Post-translationally, specific enzymatic cleavages in vivo yield mature proteins. Cleavages in the lumen of endoplasmic reticulum are performed by host signal peptidase, whereas cleavages in the cytoplasmic side are performed by serine protease NS3. Signal cleavage at the 2K-4B site requires a prior NS3 protease-mediated cleavage at the 4A-2K site. In terms of processing, cleaved in post-Golgi vesicles by a host furin, releasing the mature small envelope protein M, and peptide pr. This cleavage is incomplete as up to 30% of viral particles still carry uncleaved prM. N-glycosylated. Post-translationally, N-glycosylated. The excreted form is glycosylated and this is required for efficient secretion of the protein from infected cells. In terms of processing, acetylated by host KAT5. Acetylation modulates NS3 RNA-binding and unwinding activities and plays an important positive role for viral replication. Sumoylation of RNA-directed RNA polymerase NS5 increases NS5 protein stability allowing proper viral RNA replication. Post-translationally, phosphorylated on serines residues. This phosphorylation may trigger NS5 nuclear localization.

The protein localises to the virion. The protein resides in the host nucleus. It localises to the host cytoplasm. Its subcellular location is the host perinuclear region. It is found in the secreted. The protein localises to the virion membrane. The protein resides in the host endoplasmic reticulum membrane. It localises to the host mitochondrion. It catalyses the reaction Selective hydrolysis of -Xaa-Xaa-|-Yaa- bonds in which each of the Xaa can be either Arg or Lys and Yaa can be either Ser or Ala.. The catalysed reaction is RNA(n) + a ribonucleoside 5'-triphosphate = RNA(n+1) + diphosphate. It carries out the reaction a ribonucleoside 5'-triphosphate + H2O = a ribonucleoside 5'-diphosphate + phosphate + H(+). The enzyme catalyses ATP + H2O = ADP + phosphate + H(+). It catalyses the reaction a 5'-end (5'-triphosphoguanosine)-ribonucleoside in mRNA + S-adenosyl-L-methionine = a 5'-end (N(7)-methyl 5'-triphosphoguanosine)-ribonucleoside in mRNA + S-adenosyl-L-homocysteine. The catalysed reaction is a 5'-end (N(7)-methyl 5'-triphosphoguanosine)-ribonucleoside in mRNA + S-adenosyl-L-methionine = a 5'-end (N(7)-methyl 5'-triphosphoguanosine)-(2'-O-methyl-ribonucleoside) in mRNA + S-adenosyl-L-homocysteine + H(+). In terms of biological role, plays a role in virus budding by binding to the cell membrane and gathering the viral RNA into a nucleocapsid that forms the core of a mature virus particle. During virus entry, may induce genome penetration into the host cytoplasm after hemifusion induced by the surface proteins. Can migrate to the cell nucleus where it modulates host functions. Overcomes the anti-viral effects of host EXOC1 by sequestering and degrading the latter through the proteasome degradation pathway. Functionally, inhibits RNA silencing by interfering with host Dicer. Prevents premature fusion activity of envelope proteins in trans-Golgi by binding to envelope protein E at pH6.0. After virion release in extracellular space, gets dissociated from E dimers. Its function is as follows. Acts as a chaperone for envelope protein E during intracellular virion assembly by masking and inactivating envelope protein E fusion peptide. prM is the only viral peptide matured by host furin in the trans-Golgi network probably to avoid catastrophic activation of the viral fusion activity in acidic Golgi compartment prior to virion release. prM-E cleavage is inefficient, and many virions are only partially matured. These uncleaved prM would play a role in immune evasion. In terms of biological role, may play a role in virus budding. Exerts cytotoxic effects by activating a mitochondrial apoptotic pathway through M ectodomain. May display a viroporin activity. Functionally, binds to host cell surface receptor and mediates fusion between viral and cellular membranes. Envelope protein is synthesized in the endoplasmic reticulum in the form of heterodimer with protein prM. They play a role in virion budding in the ER, and the newly formed immature particle is covered with 60 spikes composed of heterodimer between precursor prM and envelope protein E. The virion is transported to the Golgi apparatus where the low pH causes dissociation of PrM-E heterodimers and formation of E homodimers. prM-E cleavage is inefficient, and many virions are only partially matured. These uncleaved prM would play a role in immune evasion. Involved in immune evasion, pathogenesis and viral replication. Once cleaved off the polyprotein, is targeted to three destinations: the viral replication cycle, the plasma membrane and the extracellular compartment. Essential for viral replication. Required for formation of the replication complex and recruitment of other non-structural proteins to the ER-derived membrane structures. Excreted as a hexameric lipoparticle that plays a role against host immune response. Antagonizing the complement function. Binds to the host macrophages and dendritic cells. Inhibits signal transduction originating from Toll-like receptor 3 (TLR3). Its function is as follows. Disrupts the host endothelial glycocalyx layer of host pulmonary microvascular endothelial cells, inducing degradation of sialic acid and shedding of heparan sulfate proteoglycans. NS1 induces expression of sialidases, heparanase, and activates cathepsin L, which activates heparanase via enzymatic cleavage. These effects are probably linked to the endothelial hyperpermeability observed in severe dengue disease. In terms of biological role, component of the viral RNA replication complex that functions in virion assembly and antagonizes the host immune response. Functionally, required cofactor for the serine protease function of NS3. May have membrane-destabilizing activity and form viroporins. Displays three enzymatic activities: serine protease, NTPase and RNA helicase. NS3 serine protease, in association with NS2B, performs its autocleavage and cleaves the polyprotein at dibasic sites in the cytoplasm: C-prM, NS2A-NS2B, NS2B-NS3, NS3-NS4A, NS4A-2K and NS4B-NS5. NS3 RNA helicase binds RNA and unwinds dsRNA in the 3' to 5' direction. Its function is as follows. Regulates the ATPase activity of the NS3 helicase activity. NS4A allows NS3 helicase to conserve energy during unwinding. Plays a role in the inhibition of the host innate immune response. Interacts with host MAVS and thereby prevents the interaction between RIGI and MAVS. In turn, IFN-beta production is impaired. Interacts with host AUP1 which mediates induction of lipophagy in host cells and facilitates production of virus progeny particles. In terms of biological role, functions as a signal peptide for NS4B and is required for the interferon antagonism activity of the latter. Functionally, induces the formation of ER-derived membrane vesicles where the viral replication takes place. Inhibits interferon (IFN)-induced host STAT1 phosphorylation and nuclear translocation, thereby preventing the establishment of cellular antiviral state by blocking the IFN-alpha/beta pathway. Replicates the viral (+) and (-) RNA genome, and performs the capping of genomes in the cytoplasm. NS5 methylates viral RNA cap at guanine N-7 and ribose 2'-O positions. Besides its role in RNA genome replication, also prevents the establishment of cellular antiviral state by blocking the interferon-alpha/beta (IFN-alpha/beta) signaling pathway. Inhibits host TYK2 and STAT2 phosphorylation, thereby preventing activation of JAK-STAT signaling pathway. This chain is Genome polyprotein, found in Dengue virus type 3 (strain Philippines/H87/1956) (DENV-3).